A 259-amino-acid chain; its full sequence is uncharacterized protein (259 aa).

The 150-residue stretch at 110–259 (QMGHPLTAWG…VHTVFHYFLT (150 aa)) folds into the N-acetyltransferase domain.

Its function is as follows. May be involved in maturation of the outermost layer of the spore. This is an uncharacterized protein from Bacillus subtilis (strain 168).